The primary structure comprises 120 residues: uncharacterized protein (120 aa).

An N-terminal signal peptide occupies residues 1-16 (MFKFILLCFCINFAFS).

This is an uncharacterized protein from Acheta domesticus (House cricket).